We begin with the raw amino-acid sequence, 148 residues long: Coactosin (148 aa).

One can recognise an ADF-H domain in the interval 1–134 (MSGFDLSEVA…VEDEIAAKIK (134 aa)). The F-loop; important for stable binding to G-actin and F-actin signature appears at 71–76 (DEESKR). The residue at position 147 (S147) is a Phosphoserine.

Belongs to the actin-binding proteins ADF family. Coactosin subfamily. Interacts with 14-3-3 protein 3. Phosphorylation at Ser-147 appears not to affect its binding to actin; however, it may regulate phagocytosis and motility.

The protein localises to the cytoplasm. Its subcellular location is the cell projection. The protein resides in the phagocytic cup. It localises to the pseudopodium. It is found in the cell membrane. The protein localises to the cytoskeleton. Actin-binding protein which is involved in F-actin stabilization. May play a role during phagocytosis and pseudopod formation by contributing to the maintenance of F-actin. The polypeptide is Coactosin (Entamoeba histolytica (strain ATCC 30459 / HM-1:IMSS / ABRM)).